The sequence spans 211 residues: Somatotropin (211 aa).

The signal sequence occupies residues 1–23; it reads MASGFLLCPVLLAVFFMSPVEVG. Zn(2+) is bound at residue H40. An intrachain disulfide couples C73 to C184. E193 serves as a coordination point for Zn(2+). C201 and C209 form a disulfide bridge.

Belongs to the somatotropin/prolactin family.

It is found in the secreted. Functionally, growth hormone plays an important role in growth control and is involved in the regulation of several anabolic processes. Implicated as an osmoregulatory substance important for seawater adaptation. This chain is Somatotropin (gh), found in Lepisosteus osseus (Long-nosed gar).